Here is a 611-residue protein sequence, read N- to C-terminus: Dolabella-3,7-dien-18-ol synthase TPS06 (611 aa).

Mg(2+) contacts are provided by Asp-363, Asp-367, Asp-507, Thr-511, and Glu-515. Residues 363–367 (DNTFD) carry the DDXXD motif; degenerate motif.

Belongs to the terpene synthase family. Tpsa subfamily. Mg(2+) serves as cofactor. Mn(2+) is required as a cofactor. Predominantly expressed in flowers but also in stems, siliques, roots and leaves.

Its subcellular location is the cytoplasm. The enzyme catalyses (2E,6E,10E)-geranylgeranyl diphosphate + H2O = (3E,7E)-dolabella-3,7-dien-18-ol + diphosphate. Its pathway is secondary metabolite biosynthesis; terpenoid biosynthesis. Functionally, involved in terpene biosynthesis in roots. Possesses sesquiterpene (C15) synthase activity and diterpene (C20) synthase activity in vitro. Possesses dolabella-3,7-dien-18-ol synthase activity in vitro. Catalyzes the formation of dolabella-3,7-dien-18-ol from geranylgeranyl diphosphate. The polypeptide is Dolabella-3,7-dien-18-ol synthase TPS06 (Arabidopsis thaliana (Mouse-ear cress)).